The sequence spans 124 residues: Large ribosomal subunit protein bL12 (124 aa).

This sequence belongs to the bacterial ribosomal protein bL12 family. Homodimer. Part of the ribosomal stalk of the 50S ribosomal subunit. Forms a multimeric L10(L12)X complex, where L10 forms an elongated spine to which 2 to 4 L12 dimers bind in a sequential fashion. Binds GTP-bound translation factors.

Functionally, forms part of the ribosomal stalk which helps the ribosome interact with GTP-bound translation factors. Is thus essential for accurate translation. The polypeptide is Large ribosomal subunit protein bL12 (Desulfitobacterium hafniense (strain DSM 10664 / DCB-2)).